The chain runs to 420 residues: MSSETVSYFSHPFPRRQSVGVSVGGVIVGGSAPVVVQSMTNTDTADVDSTVAQVAALHRAGSEIVRITVDRDESAAAVPKIRERLERLGHDVPLVGDFHYIGHKLLADHPACAEALSKYRINPGNVGFKDKKDKQFADIVEMAIRYDKPVRIGVNWGSLDQELLTALMDRNQAEGAPLSAQDVMREAIVQSALISANLAEEIGLGRDKIILSAKVSQVQDLIAVYTMLAQRSNHALHLGLTEAGMGTKGIVASSAAMGILLQQGIGDTIRISLTPEPGGDRTREVQVAQELLQTMGFRQFVPIVAACPGCGRTTSTVFQELAQTIQEDIRRNMPLWREKYPGVEALSVAVMGCIVNGPGESKHADIGISLPGTGETPSAPVFVDGKKVTTLRGPGIAEDFQKMVADYIENRFGLGRKIAS.

Residues Cys307, Cys310, Cys353, and Glu360 each coordinate [4Fe-4S] cluster.

It belongs to the IspG family. It depends on [4Fe-4S] cluster as a cofactor.

The catalysed reaction is (2E)-4-hydroxy-3-methylbut-2-enyl diphosphate + oxidized [flavodoxin] + H2O + 2 H(+) = 2-C-methyl-D-erythritol 2,4-cyclic diphosphate + reduced [flavodoxin]. The protein operates within isoprenoid biosynthesis; isopentenyl diphosphate biosynthesis via DXP pathway; isopentenyl diphosphate from 1-deoxy-D-xylulose 5-phosphate: step 5/6. In terms of biological role, converts 2C-methyl-D-erythritol 2,4-cyclodiphosphate (ME-2,4cPP) into 1-hydroxy-2-methyl-2-(E)-butenyl 4-diphosphate. This chain is 4-hydroxy-3-methylbut-2-en-1-yl diphosphate synthase (flavodoxin), found in Brucella abortus (strain S19).